We begin with the raw amino-acid sequence, 101 residues long: Urease subunit beta (101 aa).

Belongs to the urease beta subunit family. In terms of assembly, heterotrimer of UreA (gamma), UreB (beta) and UreC (alpha) subunits. Three heterotrimers associate to form the active enzyme.

Its subcellular location is the cytoplasm. The catalysed reaction is urea + 2 H2O + H(+) = hydrogencarbonate + 2 NH4(+). The protein operates within nitrogen metabolism; urea degradation; CO(2) and NH(3) from urea (urease route): step 1/1. The polypeptide is Urease subunit beta (Rhodopseudomonas palustris (strain HaA2)).